A 126-amino-acid polypeptide reads, in one-letter code: Interleukin-18-binding protein (126 aa).

The signal sequence occupies residues 1–20; that stretch reads MRILFLIAFMYGCVHPYVNA.

The protein belongs to the orthopoxvirus OPG022 family.

It localises to the secreted. Its function is as follows. Soluble IL18-binding protein that may modulate the host antiviral response. The protein is Interleukin-18-binding protein (OPG022) of Bos taurus (Bovine).